Reading from the N-terminus, the 194-residue chain is Holliday junction branch migration complex subunit RuvA (194 aa).

Residues 1–64 are domain I; that stretch reads MISSLNGILE…EDALSLFGFA (64 aa). Residues 65-143 are domain II; that stretch reads TTEELSLFET…KNWEAGVLSQ (79 aa). Positions 144–149 are flexible linker; that stretch reads VTEANS. A domain III region spans residues 149-194; sequence SDILATLTALGYSSSEAAKAISSLGDNGDLPLEERIKLALNYFNNK.

It belongs to the RuvA family. In terms of assembly, homotetramer. Forms an RuvA(8)-RuvB(12)-Holliday junction (HJ) complex. HJ DNA is sandwiched between 2 RuvA tetramers; dsDNA enters through RuvA and exits via RuvB. An RuvB hexamer assembles on each DNA strand where it exits the tetramer. Each RuvB hexamer is contacted by two RuvA subunits (via domain III) on 2 adjacent RuvB subunits; this complex drives branch migration. In the full resolvosome a probable DNA-RuvA(4)-RuvB(12)-RuvC(2) complex forms which resolves the HJ.

It is found in the cytoplasm. Its function is as follows. The RuvA-RuvB-RuvC complex processes Holliday junction (HJ) DNA during genetic recombination and DNA repair, while the RuvA-RuvB complex plays an important role in the rescue of blocked DNA replication forks via replication fork reversal (RFR). RuvA specifically binds to HJ cruciform DNA, conferring on it an open structure. The RuvB hexamer acts as an ATP-dependent pump, pulling dsDNA into and through the RuvAB complex. HJ branch migration allows RuvC to scan DNA until it finds its consensus sequence, where it cleaves and resolves the cruciform DNA. The sequence is that of Holliday junction branch migration complex subunit RuvA from Dehalococcoides mccartyi (strain CBDB1).